The primary structure comprises 657 residues: UvrABC system protein B (657 aa).

The region spanning 23–414 is the Helicase ATP-binding domain; sequence KSIKKGNKYQ…KENIFHQIMR (392 aa). 36–43 is an ATP binding site; that stretch reads GVTGSGKT. Positions 89–112 match the Beta-hairpin motif; it reads YYDYYQPEAYIPRTDVFIEKDSST. In terms of domain architecture, Helicase C-terminal spans 431–593; the sequence is QVEILFDEAK…ITPTSVKRHI (163 aa). Positions 622–657 constitute a UVR domain; that stretch reads AKLVKELRKQMLEAAKALEFEKAAAIRDEINKLRDL.

It belongs to the UvrB family. As to quaternary structure, forms a heterotetramer with UvrA during the search for lesions. Interacts with UvrC in an incision complex.

It is found in the cytoplasm. The UvrABC repair system catalyzes the recognition and processing of DNA lesions. A damage recognition complex composed of 2 UvrA and 2 UvrB subunits scans DNA for abnormalities. Upon binding of the UvrA(2)B(2) complex to a putative damaged site, the DNA wraps around one UvrB monomer. DNA wrap is dependent on ATP binding by UvrB and probably causes local melting of the DNA helix, facilitating insertion of UvrB beta-hairpin between the DNA strands. Then UvrB probes one DNA strand for the presence of a lesion. If a lesion is found the UvrA subunits dissociate and the UvrB-DNA preincision complex is formed. This complex is subsequently bound by UvrC and the second UvrB is released. If no lesion is found, the DNA wraps around the other UvrB subunit that will check the other stand for damage. In Campylobacter jejuni subsp. jejuni serotype O:2 (strain ATCC 700819 / NCTC 11168), this protein is UvrABC system protein B.